The sequence spans 73 residues: Putative defensin-like protein 270 (73 aa).

Positions 1–23 (MMSSKSHFVALLLIIFLIVNVQS) are cleaved as a signal peptide. Disulfide bonds link C33–C72, C39–C60, C45–C70, and C49–C71.

Belongs to the DEFL family.

The protein resides in the secreted. This is Putative defensin-like protein 270 from Arabidopsis thaliana (Mouse-ear cress).